The following is a 492-amino-acid chain: Glutamyl-tRNA(Gln) amidotransferase subunit A (492 aa).

Active-site charge relay system residues include K78 and S158. The active-site Acyl-ester intermediate is the S182.

Belongs to the amidase family. GatA subfamily. As to quaternary structure, heterotrimer of A, B and C subunits.

It carries out the reaction L-glutamyl-tRNA(Gln) + L-glutamine + ATP + H2O = L-glutaminyl-tRNA(Gln) + L-glutamate + ADP + phosphate + H(+). In terms of biological role, allows the formation of correctly charged Gln-tRNA(Gln) through the transamidation of misacylated Glu-tRNA(Gln) in organisms which lack glutaminyl-tRNA synthetase. The reaction takes place in the presence of glutamine and ATP through an activated gamma-phospho-Glu-tRNA(Gln). This Zymomonas mobilis subsp. mobilis (strain ATCC 31821 / ZM4 / CP4) protein is Glutamyl-tRNA(Gln) amidotransferase subunit A.